Here is a 590-residue protein sequence, read N- to C-terminus: MTLHNNNTTSPLFPNISSSWIHGPSDTGLPPGTVTHFGSYNISRAAGNLSSPNGTTSDPLGGHTIWQVVFIAFLTGVLALVTIIGNILVIVAFKVNKQLKTVNNYFLLSLACADLIIGVISMNLFTTYIIMNRWALGNLACDLWLSIDYVASNASVMNLLVISFDRYFSITRPLTYRAKRTTKRAGVMIGLAWVISFILWAPAILFWQYFVGKRTVPPGECFIQFLSEPTITFGTAIAAFYMPVTIMTILYWRIYKETEKRTKELAGLQASGTEAEAENFVHPTGSSRSCSSYELQQQSMKRSARRKYGRCHFWFTTKSWKPSAEQMDQDHSSSDSWNNNDAAASLENSASSDEEDIGSETRAIYSIVLKLPGHSTILNSTKLPSSDNLQVPEEELGSVGLERKPSKLQTQQSMDDGGSFQKSFSKLPIQLESAVDTAKASDVNSSVGKTTATLPLSFKEATLAKRFALKTRSQITKRKRMSLIKEKKAAQTLSAILLAFIITWTPYNIMVLVNTFCDSCIPKTYWNLGYWLCYINSTVNPVCYALCNKTFRNTFKMLLLCQCDKRKRRKQQYQQRQSVIFHKRVPEQAL.

The Extracellular segment spans residues 1-67; it reads MTLHNNNTTS…DPLGGHTIWQ (67 aa). Asn6, Asn7, Asn15, Asn41, Asn48, and Asn53 each carry an N-linked (GlcNAc...) asparagine glycan. A helical transmembrane segment spans residues 68 to 91; the sequence is VVFIAFLTGVLALVTIIGNILVIV. Residues 92 to 104 are Cytoplasmic-facing; it reads AFKVNKQLKTVNN. A helical membrane pass occupies residues 105-125; sequence YFLLSLACADLIIGVISMNLF. At 126 to 142 the chain is on the extracellular side; the sequence is TTYIIMNRWALGNLACD. Cys141 and Cys221 are joined by a disulfide. A helical membrane pass occupies residues 143–164; the sequence is LWLSIDYVASNASVMNLLVISF. The Cytoplasmic segment spans residues 165-184; the sequence is DRYFSITRPLTYRAKRTTKR. Residues 185 to 207 traverse the membrane as a helical segment; sequence AGVMIGLAWVISFILWAPAILFW. Residues 208–229 are Extracellular-facing; sequence QYFVGKRTVPPGECFIQFLSEP. A helical membrane pass occupies residues 230 to 252; the sequence is TITFGTAIAAFYMPVTIMTILYW. Topologically, residues 253-492 are cytoplasmic; the sequence is RIYKETEKRT…LIKEKKAAQT (240 aa). Positions 275 to 281 match the Basolateral sorting signal motif; the sequence is AEAENFV. The disordered stretch occupies residues 324 to 357; sequence AEQMDQDHSSSDSWNNNDAAASLENSASSDEEDI. Low complexity predominate over residues 334–345; that stretch reads SDSWNNNDAAAS. Residue Ser385 is modified to Phosphoserine. Positions 398-419 are disordered; it reads SVGLERKPSKLQTQQSMDDGGS. Over residues 407-419 the composition is skewed to polar residues; that stretch reads KLQTQQSMDDGGS. A helical transmembrane segment spans residues 493–513; that stretch reads LSAILLAFIITWTPYNIMVLV. The Extracellular segment spans residues 514–527; sequence NTFCDSCIPKTYWN. Residues 528–547 form a helical membrane-spanning segment; it reads LGYWLCYINSTVNPVCYALC. At 548–590 the chain is on the cytoplasmic side; it reads NKTFRNTFKMLLLCQCDKRKRRKQQYQQRQSVIFHKRVPEQAL.

The protein belongs to the G-protein coupled receptor 1 family. Muscarinic acetylcholine receptor subfamily. CHRM3 sub-subfamily. Homodimer; the dimers can form tetramers. Interacts with NALCN. Interacts with TMEM147.

It is found in the cell membrane. It localises to the postsynaptic cell membrane. Its subcellular location is the basolateral cell membrane. The protein localises to the endoplasmic reticulum membrane. In terms of biological role, the muscarinic acetylcholine receptor mediates various cellular responses, including inhibition of adenylate cyclase, breakdown of phosphoinositides and modulation of potassium channels through the action of G proteins. Primary transducing effect is Pi turnover. This is Muscarinic acetylcholine receptor M3 (CHRM3) from Bos taurus (Bovine).